A 362-amino-acid chain; its full sequence is Peptide chain release factor 1 (362 aa).

Q238 bears the N5-methylglutamine mark.

It belongs to the prokaryotic/mitochondrial release factor family. Post-translationally, methylated by PrmC. Methylation increases the termination efficiency of RF1.

It localises to the cytoplasm. In terms of biological role, peptide chain release factor 1 directs the termination of translation in response to the peptide chain termination codons UAG and UAA. This Psychrobacter cryohalolentis (strain ATCC BAA-1226 / DSM 17306 / VKM B-2378 / K5) protein is Peptide chain release factor 1.